Consider the following 658-residue polypeptide: Glycogen debranching enzyme (658 aa).

The active-site Nucleophile is D336. E371 (proton donor) is an active-site residue. The segment at E459–G484 is disordered.

The protein belongs to the glycosyl hydrolase 13 family.

It carries out the reaction Hydrolysis of (1-&gt;6)-alpha-D-glucosidic linkages to branches with degrees of polymerization of three or four glucose residues in limit dextrin.. It functions in the pathway glycan degradation; glycogen degradation. Functionally, removes maltotriose and maltotetraose chains that are attached by 1,6-alpha-linkage to the limit dextrin main chain, generating a debranched limit dextrin. The protein is Glycogen debranching enzyme of Salmonella choleraesuis (strain SC-B67).